The following is a 329-amino-acid chain: Ribosomal RNA small subunit methyltransferase H (329 aa).

S-adenosyl-L-methionine-binding positions include 44-46 (GGY), Asp-62, Asp-110, and Gln-117. The tract at residues 297-329 (APAELAANPRARSARLRSAERTSAPARRLGDAA) is disordered.

Belongs to the methyltransferase superfamily. RsmH family.

It localises to the cytoplasm. The enzyme catalyses cytidine(1402) in 16S rRNA + S-adenosyl-L-methionine = N(4)-methylcytidine(1402) in 16S rRNA + S-adenosyl-L-homocysteine + H(+). Functionally, specifically methylates the N4 position of cytidine in position 1402 (C1402) of 16S rRNA. This Rhodospirillum centenum (strain ATCC 51521 / SW) protein is Ribosomal RNA small subunit methyltransferase H.